The primary structure comprises 115 residues: MNLMLVLLINTTISLVLVTIAFWLPQLNIYSEKSSPYECGFDPMGSARLPFSMKFFLVAITFLLFDLEIALLLPLPWAAQFNNLNLVLIMALMLISILALGLAYEWIQKGLEWVE.

3 helical membrane passes run 3-23, 55-75, and 87-107; these read LMLV…IAFW, FFLV…LLPL, and VLIM…YEWI.

The protein belongs to the complex I subunit 3 family. As to quaternary structure, core subunit of respiratory chain NADH dehydrogenase (Complex I) which is composed of 45 different subunits. Interacts with TMEM186. Interacts with TMEM242.

It localises to the mitochondrion inner membrane. It catalyses the reaction a ubiquinone + NADH + 5 H(+)(in) = a ubiquinol + NAD(+) + 4 H(+)(out). In terms of biological role, core subunit of the mitochondrial membrane respiratory chain NADH dehydrogenase (Complex I) which catalyzes electron transfer from NADH through the respiratory chain, using ubiquinone as an electron acceptor. Essential for the catalytic activity of complex I. The sequence is that of NADH-ubiquinone oxidoreductase chain 3 from Oryctolagus cuniculus (Rabbit).